A 138-amino-acid chain; its full sequence is Small ribosomal subunit protein uS11c (138 aa).

Belongs to the universal ribosomal protein uS11 family. Part of the 30S ribosomal subunit.

It localises to the plastid. The protein resides in the chloroplast. The polypeptide is Small ribosomal subunit protein uS11c (Nandina domestica (Heavenly bamboo)).